The following is a 367-amino-acid chain: 3-dehydroquinate synthase (367 aa).

NAD(+)-binding positions include 72–77, 106–110, 130–131, Lys-143, Lys-152, and 170–173; these read DGENYK, GVIGD, TT, and FLST. Zn(2+)-binding residues include Glu-185, His-248, and His-265.

The protein belongs to the sugar phosphate cyclases superfamily. Dehydroquinate synthase family. Co(2+) is required as a cofactor. The cofactor is Zn(2+). NAD(+) serves as cofactor.

It localises to the cytoplasm. The catalysed reaction is 7-phospho-2-dehydro-3-deoxy-D-arabino-heptonate = 3-dehydroquinate + phosphate. It functions in the pathway metabolic intermediate biosynthesis; chorismate biosynthesis; chorismate from D-erythrose 4-phosphate and phosphoenolpyruvate: step 2/7. Its function is as follows. Catalyzes the conversion of 3-deoxy-D-arabino-heptulosonate 7-phosphate (DAHP) to dehydroquinate (DHQ). The polypeptide is 3-dehydroquinate synthase (Buchnera aphidicola subsp. Cinara cedri (strain Cc)).